The following is a 103-amino-acid chain: MDIQYLMRQAKKLEKAMADAKEKLAEIAVEAESGGGLVKVAMNGKCEITRLTVDPKAVDPNDKALLEDLVTAAVNAAVEKARTAADESMSKATGGIKIPGIAG.

Belongs to the YbaB/EbfC family. In terms of assembly, homodimer.

It localises to the cytoplasm. It is found in the nucleoid. Binds to DNA and alters its conformation. May be involved in regulation of gene expression, nucleoid organization and DNA protection. This is Nucleoid-associated protein A2cp1_3777 from Anaeromyxobacter dehalogenans (strain 2CP-1 / ATCC BAA-258).